A 225-amino-acid polypeptide reads, in one-letter code: uncharacterized protein (225 aa).

Positions 69, 71, and 100 each coordinate a divalent metal cation.

This sequence belongs to the FAH family.

This is an uncharacterized protein from Pyrococcus abyssi (strain GE5 / Orsay).